Here is a 171-residue protein sequence, read N- to C-terminus: Large ribosomal subunit protein bL17 (171 aa).

The segment at P130–K171 is disordered. Residues K133 to K149 are compositionally biased toward basic residues. The span at A150–A165 shows a compositional bias: low complexity.

The protein belongs to the bacterial ribosomal protein bL17 family. As to quaternary structure, part of the 50S ribosomal subunit. Contacts protein L32.

This Opitutus terrae (strain DSM 11246 / JCM 15787 / PB90-1) protein is Large ribosomal subunit protein bL17.